Here is a 305-residue protein sequence, read N- to C-terminus: MANSKTAAEAAIHGQIEKTTAWKDFLALIKMGIVNSNFITTFTGMWLAFYFTGMSFLGNLDIVLLTMIGSSLIIAGSCAINNAFDRDIDILMERTKTRPTVTGKIQPGQAYAFGILLVVLGLIMLLMTTVTSAVIGFIGVFTYAVLYTMWSKRHYTINTVIGSVSGAVPPLIGWTAVTGTIDTTAWVLFMIMFIWQIPHFLSLAIKKTEDYRKAGIPMLPVVYGFEVTKRQIIIWTACLLPLPFFLGGLGWPIVALGTLLNIGWLVIGLMGFKMKDVMKWSTLMFVYSLNYLTIFFVAMIIITLF.

Transmembrane regions (helical) follow at residues 38–58 (FITTFTGMWLAFYFTGMSFLG), 60–80 (LDIVLLTMIGSSLIIAGSCAI), 110–130 (AYAFGILLVVLGLIMLLMTTV), 131–151 (TSAVIGFIGVFTYAVLYTMWS), 161–181 (IGSVSGAVPPLIGWTAVTGTI), 185–205 (AWVLFMIMFIWQIPHFLSLAI), 227–247 (VTKRQIIIWTACLLPLPFFLG), 249–269 (LGWPIVALGTLLNIGWLVIGL), and 285–305 (FVYSLNYLTIFFVAMIIITLF).

It belongs to the UbiA prenyltransferase family. Protoheme IX farnesyltransferase subfamily. Interacts with CtaA.

It is found in the cell membrane. It catalyses the reaction heme b + (2E,6E)-farnesyl diphosphate + H2O = Fe(II)-heme o + diphosphate. It participates in porphyrin-containing compound metabolism; heme O biosynthesis; heme O from protoheme: step 1/1. Converts heme B (protoheme IX) to heme O by substitution of the vinyl group on carbon 2 of heme B porphyrin ring with a hydroxyethyl farnesyl side group. In Bacillus pumilus (strain SAFR-032), this protein is Protoheme IX farnesyltransferase.